Here is a 154-residue protein sequence, read N- to C-terminus: Myoglobin (154 aa).

The region spanning 2-148 is the Globin domain; sequence GLSEAEWQLV…FRKDIAAKYK (147 aa). The residue at position 4 (serine 4) is a Phosphoserine. Histidine 65 contacts nitrite. Residue histidine 65 coordinates O2. Position 68 is a phosphothreonine (threonine 68). Histidine 94 provides a ligand contact to heme b.

The protein belongs to the globin family. In terms of assembly, monomeric.

Its subcellular location is the cytoplasm. It localises to the sarcoplasm. It carries out the reaction Fe(III)-heme b-[protein] + nitric oxide + H2O = Fe(II)-heme b-[protein] + nitrite + 2 H(+). It catalyses the reaction H2O2 + AH2 = A + 2 H2O. In terms of biological role, monomeric heme protein which primary function is to store oxygen and facilitate its diffusion within muscle tissues. Reversibly binds oxygen through a pentacoordinated heme iron and enables its timely and efficient release as needed during periods of heightened demand. Depending on the oxidative conditions of tissues and cells, and in addition to its ability to bind oxygen, it also has a nitrite reductase activity whereby it regulates the production of bioactive nitric oxide. Under stress conditions, like hypoxia and anoxia, it also protects cells against reactive oxygen species thanks to its pseudoperoxidase activity. This chain is Myoglobin (MB), found in Ziphius cavirostris (Cuvier's beaked whale).